The chain runs to 634 residues: uncharacterized protein (634 aa).

An N-terminal signal peptide occupies residues 1-40 (MWLQQRLKGLPGLLSSSWARRLLCLLGLLVLLLWFAGSGA). Residues 41–589 (RRAAGGLQLL…DEHMAQQDPG (549 aa)) lie on the Extracellular side of the membrane. Asn-363 is a glycosylation site (N-linked (GlcNAc...) asparagine). Residues 590-610 (LPFLFWFSVASLITLFHLFLF) traverse the membrane as a helical segment. Topologically, residues 611-634 (KLIYNEYCGPGAKPFFRNKEDPSV) are cytoplasmic.

The protein localises to the membrane. This is an uncharacterized protein from Bos taurus (Bovine).